The following is a 215-amino-acid chain: Putative B3 domain-containing protein Os11g0625400 (215 aa).

Positions 1-51 (MTVELEKIAGSFFISKGWKTFVHRTGLLSGQYIRFQVLTPSKINVLLFDKK) form a DNA-binding region, TF-B3 1. The segment at 92–117 (SHTSNKETSSDSRTESMTDIPSSSDN) is disordered. Basic and acidic residues predominate over residues 95–107 (SNKETSSDSRTES). Polar residues predominate over residues 108-117 (MTDIPSSSDN). The segment at residues 123–215 (DIKNYISIIG…PNVKITIDVL (93 aa)) is a DNA-binding region (TF-B3 2).

The protein localises to the nucleus. The protein is Putative B3 domain-containing protein Os11g0625400 of Oryza sativa subsp. japonica (Rice).